An 867-amino-acid chain; its full sequence is Valine--tRNA ligase (867 aa).

Positions proline 42–histidine 52 match the 'HIGH' region motif. The 'KMSKS' region motif lies at lysine 521 to serine 525. Lysine 524 contacts ATP. Positions leucine 794 to alanine 867 form a coiled coil.

The protein belongs to the class-I aminoacyl-tRNA synthetase family. ValS type 1 subfamily. Monomer.

The protein resides in the cytoplasm. The enzyme catalyses tRNA(Val) + L-valine + ATP = L-valyl-tRNA(Val) + AMP + diphosphate. Its function is as follows. Catalyzes the attachment of valine to tRNA(Val). As ValRS can inadvertently accommodate and process structurally similar amino acids such as threonine, to avoid such errors, it has a 'posttransfer' editing activity that hydrolyzes mischarged Thr-tRNA(Val) in a tRNA-dependent manner. The sequence is that of Valine--tRNA ligase from Fervidobacterium nodosum (strain ATCC 35602 / DSM 5306 / Rt17-B1).